Here is a 210-residue protein sequence, read N- to C-terminus: Na(+)-translocating NADH-quinone reductase subunit D (210 aa).

6 helical membrane passes run 14 to 34, 42 to 62, 72 to 92, 103 to 123, 131 to 151, and 178 to 198; these read PIVN…ALAV, LVMA…ISMI, IIVQ…LLQA, VFVG…AYAM, FMDG…VGFV, and NGLL…IWII.

This sequence belongs to the NqrDE/RnfAE family. In terms of assembly, composed of six subunits; NqrA, NqrB, NqrC, NqrD, NqrE and NqrF.

Its subcellular location is the cell inner membrane. It catalyses the reaction a ubiquinone + n Na(+)(in) + NADH + H(+) = a ubiquinol + n Na(+)(out) + NAD(+). Its function is as follows. NQR complex catalyzes the reduction of ubiquinone-1 to ubiquinol by two successive reactions, coupled with the transport of Na(+) ions from the cytoplasm to the periplasm. NqrA to NqrE are probably involved in the second step, the conversion of ubisemiquinone to ubiquinol. The chain is Na(+)-translocating NADH-quinone reductase subunit D from Shewanella baltica (strain OS223).